Here is a 974-residue protein sequence, read N- to C-terminus: Serine/threonine-protein kinase 10 (974 aa).

Positions 37-295 constitute a Protein kinase domain; sequence WEIIGELGDG…AAQLLEHPFV (259 aa). ATP-binding positions include 43-51 and Lys-66; that span reads LGDGAFGKV. Asp-158 (proton acceptor) is an active-site residue. Residues 320-332 show a composition bias toward acidic residues; sequence EDNHEDGEDEDPA. The disordered stretch occupies residues 320-479; that stretch reads EDNHEDGEDE…EKEDHCEETQ (160 aa). The segment covering 343-353 has biased composition (polar residues); sequence DPSQTSATSLN. Composition is skewed to basic and acidic residues over residues 382 to 406 and 458 to 477; these read PLKEQEDNLSDKFQVEDHDKPESEA and TMEKYLEKPKEPEKEDHCEE. Coiled-coil stretches lie at residues 605–729 and 870–950; these read QKEQ…EEQK and EKVK…EHLK.

Belongs to the protein kinase superfamily. STE Ser/Thr protein kinase family. STE20 subfamily. As to quaternary structure, homodimer. Post-translationally, autophosphorylates.

The protein resides in the cell membrane. The enzyme catalyses L-seryl-[protein] + ATP = O-phospho-L-seryl-[protein] + ADP + H(+). It catalyses the reaction L-threonyl-[protein] + ATP = O-phospho-L-threonyl-[protein] + ADP + H(+). Functionally, may act as a polo kinase kinase by mediating phosphorylation of plk1. This chain is Serine/threonine-protein kinase 10 (stk10), found in Danio rerio (Zebrafish).